Consider the following 139-residue polypeptide: Protein FAM237B (139 aa).

The first 24 residues, 1–24 (MCFATRRWFYLHLGCMMLINLVNA), serve as a signal peptide directing secretion. Methionine 112 is subject to Methionine amide. The propeptide at 113–139 (GRRQVMPPKYNFPQKITGGNLNVYLRE) is removed in the mature form.

In terms of processing, the active form requires C-terminal amidation and disulfide bond formation.

It localises to the secreted. In terms of biological role, may be capable of activating GPR83 via the GNAQ signaling pathway. This Homo sapiens (Human) protein is Protein FAM237B.